The primary structure comprises 1039 residues: Probable calcium-transporting ATPase 9, plasma membrane-type (1039 aa).

The Cytoplasmic portion of the chain corresponds to Met1–Thr175. 2 helical membrane-spanning segments follow: residues Leu176–Trp196 and Gly199–Val219. Topologically, residues Ser220–Lys250 are cytoplasmic. The next 2 helical transmembrane spans lie at Ile251–Pro271 and Val353–Leu373. Residues Val374–Thr406 are Cytoplasmic-facing. The helical transmembrane segment at Ile407–Ala427 threads the bilayer. The 4-aspartylphosphate intermediate role is filled by Asp456. Mg(2+) is bound by residues Asp758 and Asp762. A helical membrane pass occupies residues Ile825–Ala845. The Cytoplasmic segment spans residues Val846–Gln847. The next 2 membrane-spanning stretches (helical) occupy residues Leu848–Pro868 and Asn892–Glu912. At Arg913–Asn960 the chain is on the cytoplasmic side. The next 2 helical transmembrane spans lie at Trp961 to Leu981 and Trp995 to Ile1015. Over Pro1016–Ile1039 the chain is Cytoplasmic.

It belongs to the cation transport ATPase (P-type) (TC 3.A.3) family. Type IIB subfamily.

It localises to the membrane. The enzyme catalyses Ca(2+)(in) + ATP + H2O = Ca(2+)(out) + ADP + phosphate + H(+). Its activity is regulated as follows. Activated by calmodulin. In terms of biological role, this magnesium-dependent enzyme catalyzes the hydrolysis of ATP coupled with the translocation of calcium from the cytosol out of the cell, into the endoplasmic reticulum, or into organelles. In Oryza sativa subsp. japonica (Rice), this protein is Probable calcium-transporting ATPase 9, plasma membrane-type.